Consider the following 902-residue polypeptide: Ribonuclease E (902 aa).

The S1 motif domain occupies 39-119 (SNIYKGKITR…GTKGAALTTF (81 aa)). Residues Asp303 and Asp346 each coordinate Mg(2+). Residues Cys404 and Cys407 each coordinate Zn(2+). The segment at 404–407 (CPRC) is required for zinc-mediated homotetramerization and catalytic activity. A disordered region spans residues 881–902 (GKNSAGVHSATNFSNSPVSKLK). A compositionally biased stretch (polar residues) spans 889–902 (SATNFSNSPVSKLK).

The protein belongs to the RNase E/G family. RNase E subfamily. Component of the RNA degradosome, which is a multiprotein complex involved in RNA processing and mRNA degradation. Within the RNA degradosome, RNase E assembles into a homotetramer formed by a dimer of dimers. Zn(2+) is required as a cofactor. It depends on Mg(2+) as a cofactor.

The protein localises to the cytoplasm. Its subcellular location is the cell inner membrane. It carries out the reaction Endonucleolytic cleavage of single-stranded RNA in A- and U-rich regions.. Its function is as follows. Endoribonuclease that plays a central role in RNA processing and decay. Required for the maturation of 5S and 16S rRNAs and the majority of tRNAs. Also involved in the degradation of most mRNAs. The sequence is that of Ribonuclease E from Buchnera aphidicola subsp. Acyrthosiphon pisum (strain APS) (Acyrthosiphon pisum symbiotic bacterium).